The sequence spans 359 residues: Mannonate dehydratase (359 aa).

The protein belongs to the mannonate dehydratase family. Fe(2+) is required as a cofactor. Requires Mn(2+) as cofactor.

It carries out the reaction D-mannonate = 2-dehydro-3-deoxy-D-gluconate + H2O. The protein operates within carbohydrate metabolism; pentose and glucuronate interconversion. Catalyzes the dehydration of D-mannonate. The chain is Mannonate dehydratase (uxuA) from Bacillus subtilis (strain 168).